The sequence spans 588 residues: Phenol 2-monooxygenase fsqG (588 aa).

Residues 9–38 (DVLI…LIDW), 17–18 (PA), 37–39 (DWK), 45–50 (TGRADG), Tyr-232, 289–299 (ARHNRIFLAGD), Asp-299, and 309–313 (GQGMN) contribute to the FAD site. 2 residues coordinate substrate: Asp-49 and Tyr-232.

This sequence belongs to the PheA/TfdB FAD monooxygenase family. As to quaternary structure, homodimer. FAD is required as a cofactor.

Its pathway is secondary metabolite biosynthesis. Phenol 2-monooxygenase; part of the gene cluster that mediates the biosynthesis of the isoquinoline alkaloids fumisoquin A, fumisoquin B and fumisoquin C; as well as small amounts of fumipyrrole as a shunt metabolite. The products of the cluster lead to a brown coloration and are important for growth and conidiation. The nonribosomal peptide synthetase-like protein fsqF, which lacks a canonical condensation domain, is required for addition of a serine-derived dehydroalanine moiety to activated tyrosine but is not essential for the subsequent steps leading to isoquinoline formation. A different enzyme, most likely the ATP-grasp enzyme fsqD, is responsible for activation of tyrosine. Three additional enzymes encoded by the fsq cluster, the N-methyltransferase fsqC, the phenol 2-monooxygenase fsqG and the FAD-dependent oxidase fsqB, catalyze the formation of the isoquinoline ring system in the fumisoquins. FsqB converts the fspF thiolation domain-bound (2S,4S,5S)-2-amino-6-(3,4-dihydroxyphenyl)-4-hydroxy-5-(methylamino)hexanoyl into isoquinoline. The cyclization most likely proceeds via a two-step mechanism, beginning with FAD-dependent oxidation of the methyl group to an iminium species followed by electrophilic attack on the deprotonated phenol. This Aspergillus fumigatus (strain ATCC MYA-4609 / CBS 101355 / FGSC A1100 / Af293) (Neosartorya fumigata) protein is Phenol 2-monooxygenase fsqG.